Here is a 391-residue protein sequence, read N- to C-terminus: Putative gustatory receptor 98a (391 aa).

Topologically, residues 1–31 are cytoplasmic; the sequence is MEQMSGELHAASLLYMRRLMKCLGMLPFGQN. The chain crosses the membrane as a helical span at residues 32 to 52; it reads LFSKGFCYVLLFVSLGFSSYW. Residues 53 to 74 are Extracellular-facing; the sequence is RFSFDYEFDYDFLNDRFSSTID. Residues 75 to 95 form a helical membrane-spanning segment; it reads LSNFVALVLGHAIIVLELLWG. Residues 96–128 are Cytoplasmic-facing; the sequence is NCSKDVDRQLQAIHSQIKLQLGTSNSTDRVRRY. Residues 129–149 form a helical membrane-spanning segment; that stretch reads CNWIYGSLIIRWLIFIVVTIY. Residues 150 to 173 are Extracellular-facing; the sequence is SNRALTINATYSELVFLARFSEFT. The N-linked (GlcNAc...) asparagine glycan is linked to Asn-157. A helical membrane pass occupies residues 174-194; the sequence is LYCAVILFIYQELIVGGSNVL. The Cytoplasmic portion of the chain corresponds to 195–239; sequence DELYRTRYEMWSIRRLSLQKLAKLQAIHNSLWQAIRCLECYFQLS. Residues 240-260 traverse the membrane as a helical segment; sequence LITLLMKFFIDTSALPYWLYL. Residues 261–272 are Extracellular-facing; sequence SRVEHTRVAVQH. Residues 273–293 form a helical membrane-spanning segment; the sequence is YVATVECIKLLEIVVPCYLCT. At 294–347 the chain is on the cytoplasmic side; the sequence is RCDAMQRKFLSMFYTVTTDRRSSQLNAALRSLNLQLSQEKYKFSAGGMVDINTE. The chain crosses the membrane as a helical span at residues 348-368; it reads MLGKFFFGMISYIVICIQFSI. Residues 369–391 lie on the Extracellular side of the membrane; the sequence is NFRAKKMSNEQMSQNITSTSAPI. A glycan (N-linked (GlcNAc...) asparagine) is linked at Asn-383.

Belongs to the insect chemoreceptor superfamily. Gustatory receptor (GR) family. Gr2a subfamily.

It localises to the cell membrane. Probable gustatory receptor which mediates acceptance or avoidance behavior, depending on its substrates. In Drosophila melanogaster (Fruit fly), this protein is Putative gustatory receptor 98a (Gr98a).